A 289-amino-acid polypeptide reads, in one-letter code: Acetylglutamate kinase (289 aa).

Residues 60 to 61 (GG), Arg82, and Asn182 each bind substrate.

Belongs to the acetylglutamate kinase family. ArgB subfamily.

It is found in the cytoplasm. The enzyme catalyses N-acetyl-L-glutamate + ATP = N-acetyl-L-glutamyl 5-phosphate + ADP. Its pathway is amino-acid biosynthesis; L-arginine biosynthesis; N(2)-acetyl-L-ornithine from L-glutamate: step 2/4. In terms of biological role, catalyzes the ATP-dependent phosphorylation of N-acetyl-L-glutamate. In Methanothrix thermoacetophila (strain DSM 6194 / JCM 14653 / NBRC 101360 / PT) (Methanosaeta thermophila), this protein is Acetylglutamate kinase.